The chain runs to 620 residues: Glutathione-regulated potassium-efflux system protein KefC (620 aa).

A run of 12 helical transmembrane segments spans residues 4–24 (HTLIQALIYLGSAALIVPIAV), 26–46 (LGLGSVLGYLIAGCIIGPWGL), 54–74 (SILHFAEIGVVLMLFIIGLEL), 90–110 (GALQMVICGGLLGLFCMFLGL), 114–134 (VAELIGMTLALSSTAIAMQAM), 149–169 (FAVLLFQDIAAIPLVAMIPLL), 178–198 (MGAFALSALKVAGALVLVVLL), 218–238 (VFSAVALFLVFGFGLLLEEVG), 270–290 (GLLLGLFFIGVGMSIDFGTLL), 294–314 (LRIVILLLGFLIIKIAMLWLI), 327–347 (WFAVLLGQGSEFAFVVFGAAQ), and 359–379 (SLTLAVALSMAATPILLVILN). Residues 399–518 (QPRVIIAGFG…AGVEKPERET (120 aa)) form the RCK N-terminal domain. The interval 597-620 (GWQGTEEGKHTGNMADEPETKPSS) is disordered.

This sequence belongs to the monovalent cation:proton antiporter 2 (CPA2) transporter (TC 2.A.37) family. KefC subfamily. Homodimer. Interacts with the regulatory subunit KefF.

The protein resides in the cell inner membrane. In terms of biological role, pore-forming subunit of a potassium efflux system that confers protection against electrophiles. Catalyzes K(+)/H(+) antiport. The polypeptide is Glutathione-regulated potassium-efflux system protein KefC (Escherichia fergusonii (strain ATCC 35469 / DSM 13698 / CCUG 18766 / IAM 14443 / JCM 21226 / LMG 7866 / NBRC 102419 / NCTC 12128 / CDC 0568-73)).